The following is a 377-amino-acid chain: Chaperone protein DnaJ (377 aa).

The 66-residue stretch at 5–70 (DFYETLGVSK…QKRAAYDRFG (66 aa)) folds into the J domain. The segment at 138 to 216 (GKTAQIRVPT…CHGQGRVTEE (79 aa)) adopts a CR-type zinc-finger fold. Zn(2+) contacts are provided by C151, C154, C168, C171, C190, C193, C204, and C207. 4 CXXCXGXG motif repeats span residues 151-158 (CDVCSGSG), 168-175 (CATCQGSG), 190-197 (CPTCHGRG), and 204-211 (CGKCHGQG).

This sequence belongs to the DnaJ family. In terms of assembly, homodimer. It depends on Zn(2+) as a cofactor.

The protein resides in the cytoplasm. Participates actively in the response to hyperosmotic and heat shock by preventing the aggregation of stress-denatured proteins and by disaggregating proteins, also in an autonomous, DnaK-independent fashion. Unfolded proteins bind initially to DnaJ; upon interaction with the DnaJ-bound protein, DnaK hydrolyzes its bound ATP, resulting in the formation of a stable complex. GrpE releases ADP from DnaK; ATP binding to DnaK triggers the release of the substrate protein, thus completing the reaction cycle. Several rounds of ATP-dependent interactions between DnaJ, DnaK and GrpE are required for fully efficient folding. Also involved, together with DnaK and GrpE, in the DNA replication of plasmids through activation of initiation proteins. This is Chaperone protein DnaJ from Agrobacterium fabrum (strain C58 / ATCC 33970) (Agrobacterium tumefaciens (strain C58)).